The sequence spans 192 residues: MAKATTIKEALAKWEERTGQKAGEAKEVKLYAQIPPLEKMDASLSTLVNCEKLSLSTNCIEKIANLNGLKYLKILSLGRNNIKNLNGLEAVGETLEELWISYNLIEKLKGIHVMKKLKVLYMSNNLVKDWAEFSKLGELPLLGDIVFVGNPLEEKHTAEGNWMEEAVKRLPKLKKLDGNPVIKQEEEEGDES.

LRR repeat units follow at residues 49–70, 71–92, 94–115, and 116–137; these read NCEKLSLSTNCIEKIANLNGLK, YLKILSLGRNNIKNLNGLEAVG, TLEELWISYNLIEKLKGIHVMK, and KLKVLYMSNNLVKDWAEFSKLG. Positions 150-192 constitute an LRRCT domain; it reads NPLEEKHTAEGNWMEEAVKRLPKLKKLDGNPVIKQEEEEGDES.

It belongs to the dynein light chain LC1-type family. Interacts with DNAH5, a outer arm dynein heavy chain. Interacts with tubulin located within the A-tubule of the outer doublets in a ATP-independent manner.

The protein localises to the cytoplasm. Its subcellular location is the cytoskeleton. It is found in the cilium axoneme. Its function is as follows. Part of the multisubunit axonemal ATPase complexes that generate the force for cilia motility and govern beat frequency. Component of the outer arm dynein (ODA). May be involved in a mechanosensory feedback mechanism controlling ODA activity based on external conformational cues by tethering the outer arm dynein heavy chain (DNAH5) to the microtubule within the axoneme. This Xenopus laevis (African clawed frog) protein is Dynein axonemal light chain 1 (dnal1).